A 473-amino-acid polypeptide reads, in one-letter code: Arginine biosynthesis bifunctional protein ArgJ, mitochondrial (473 aa).

Substrate-binding residues include Thr201, Lys230, Thr241, Glu328, Asn468, and Thr473. Thr241 functions as the Nucleophile in the catalytic mechanism.

Belongs to the ArgJ family. In terms of assembly, heterodimer of an alpha and a beta chain. The alpha and beta chains are autoproteolytically processed from a single precursor protein within the mitochondrion.

It localises to the mitochondrion matrix. The enzyme catalyses N(2)-acetyl-L-ornithine + L-glutamate = N-acetyl-L-glutamate + L-ornithine. The catalysed reaction is L-glutamate + acetyl-CoA = N-acetyl-L-glutamate + CoA + H(+). Its pathway is amino-acid biosynthesis; L-arginine biosynthesis; L-ornithine and N-acetyl-L-glutamate from L-glutamate and N(2)-acetyl-L-ornithine (cyclic): step 1/1. The protein operates within amino-acid biosynthesis; L-arginine biosynthesis; N(2)-acetyl-L-ornithine from L-glutamate: step 1/4. Its function is as follows. Catalyzes two activities which are involved in the cyclic version of arginine biosynthesis: the synthesis of acetylglutamate from glutamate and acetyl-CoA, and of ornithine by transacetylation between acetylornithine and glutamate. In Paracoccidioides lutzii (strain ATCC MYA-826 / Pb01) (Paracoccidioides brasiliensis), this protein is Arginine biosynthesis bifunctional protein ArgJ, mitochondrial.